The primary structure comprises 106 residues: uncharacterized protein (106 aa).

The next 2 membrane-spanning stretches (helical) occupy residues 10–30 (VYIQ…VAFV) and 65–85 (LDFA…LLAY).

It localises to the membrane. This is an uncharacterized protein from Saccharomyces cerevisiae (strain ATCC 204508 / S288c) (Baker's yeast).